We begin with the raw amino-acid sequence, 492 residues long: N-succinylglutamate 5-semialdehyde dehydrogenase (492 aa).

Position 220–225 (glycine 220–glycine 225) interacts with NAD(+). Catalysis depends on residues glutamate 243 and cysteine 277.

Belongs to the aldehyde dehydrogenase family. AstD subfamily.

It catalyses the reaction N-succinyl-L-glutamate 5-semialdehyde + NAD(+) + H2O = N-succinyl-L-glutamate + NADH + 2 H(+). It functions in the pathway amino-acid degradation; L-arginine degradation via AST pathway; L-glutamate and succinate from L-arginine: step 4/5. Its function is as follows. Catalyzes the NAD-dependent reduction of succinylglutamate semialdehyde into succinylglutamate. This is N-succinylglutamate 5-semialdehyde dehydrogenase from Klebsiella pneumoniae subsp. pneumoniae (strain ATCC 700721 / MGH 78578).